A 435-amino-acid chain; its full sequence is Elongation factor 1-alpha (435 aa).

The 226-residue stretch at Lys-4–Val-229 folds into the tr-type G domain. The segment at Gly-13–Ser-20 is G1. Gly-13 to Ser-20 lines the GTP pocket. Residue Ser-20 participates in Mg(2+) binding. The interval Gly-69–Asn-73 is G2. The segment at Asp-90–Gly-93 is G3. Residues Asp-90 to His-94 and Asn-152 to Asp-155 each bind GTP. The segment at Asn-152–Asp-155 is G4. A G5 region spans residues Val-193 to Pro-195.

This sequence belongs to the TRAFAC class translation factor GTPase superfamily. Classic translation factor GTPase family. EF-Tu/EF-1A subfamily.

It localises to the cytoplasm. The catalysed reaction is GTP + H2O = GDP + phosphate + H(+). GTP hydrolase that promotes the GTP-dependent binding of aminoacyl-tRNA to the A-site of ribosomes during protein biosynthesis. The polypeptide is Elongation factor 1-alpha (Sulfurisphaera tokodaii (strain DSM 16993 / JCM 10545 / NBRC 100140 / 7) (Sulfolobus tokodaii)).